The sequence spans 309 residues: Ferrochelatase (309 aa).

2 residues coordinate Fe cation: His-185 and Glu-264.

The protein belongs to the ferrochelatase family.

It localises to the cytoplasm. The enzyme catalyses heme b + 2 H(+) = protoporphyrin IX + Fe(2+). Its pathway is porphyrin-containing compound metabolism; protoheme biosynthesis; protoheme from protoporphyrin-IX: step 1/1. Functionally, catalyzes the ferrous insertion into protoporphyrin IX. The sequence is that of Ferrochelatase from Aquifex aeolicus (strain VF5).